The sequence spans 1219 residues: FYVE, RhoGEF and PH domain-containing protein 5 (1219 aa).

Disordered stretches follow at residues methionine 1 to isoleucine 85, glutamate 94 to serine 113, serine 201 to proline 227, and glycine 310 to valine 367. Acidic residues predominate over residues glutamate 23–glutamate 50. Positions serine 201 to serine 214 are enriched in polar residues. The segment covering arginine 319–asparagine 337 has biased composition (basic and acidic residues). Residues serine 346–leucine 356 show a composition bias toward polar residues. The span at proline 357–valine 367 shows a compositional bias: low complexity. Threonine 555 carries the phosphothreonine modification. The span at glutamate 586–alanine 599 shows a compositional bias: low complexity. Residues glutamate 586–glycine 644 form a disordered region. Acidic residues predominate over residues threonine 618 to aspartate 630. Basic and acidic residues predominate over residues serine 631–glycine 644. One can recognise a DH domain in the interval arginine 647–serine 840. The region spanning glutamate 869 to proline 963 is the PH 1 domain. Residues valine 998–lysine 1057 form an FYVE-type zinc finger. The Zn(2+) site is built by cysteine 1004, cysteine 1007, cysteine 1020, cysteine 1023, cysteine 1028, cysteine 1031, cysteine 1049, and cysteine 1052. The PH 2 domain maps to glycine 1120 to valine 1218.

As to expression, expressed in highly vascularized tissues, such as lung, kidney and ovary.

The protein resides in the cytoplasm. It localises to the cytoskeleton. Its subcellular location is the cell projection. The protein localises to the ruffle membrane. It is found in the endoplasmic reticulum. The protein resides in the golgi apparatus. It localises to the early endosome. Its function is as follows. Activates CDC42, a member of the Ras-like family of Rho- and Rac proteins, by exchanging bound GDP for free GTP. Mediates VEGF-induced CDC42 activation. May regulate proangiogenic action of VEGF in vascular endothelial cells, including network formation, directional movement and proliferation. May play a role in regulating the actin cytoskeleton and cell shape. This chain is FYVE, RhoGEF and PH domain-containing protein 5 (Fgd5), found in Mus musculus (Mouse).